A 105-amino-acid polypeptide reads, in one-letter code: Malonate decarboxylase acyl carrier protein (105 aa).

Position 28 is an O-(phosphoribosyl dephospho-coenzyme A)serine (Ser28).

It belongs to the MdcC family. Covalently binds the prosthetic group of malonate decarboxylase.

The protein resides in the cytoplasm. Its function is as follows. Subunit of malonate decarboxylase, it is an acyl carrier protein to which acetyl and malonyl thioester residues are bound via a 2'-(5''-phosphoribosyl)-3'-dephospho-CoA prosthetic group and turn over during the catalytic mechanism. The protein is Malonate decarboxylase acyl carrier protein of Bradyrhizobium diazoefficiens (strain JCM 10833 / BCRC 13528 / IAM 13628 / NBRC 14792 / USDA 110).